We begin with the raw amino-acid sequence, 108 residues long: Succinate dehydrogenase assembly factor 4, mitochondrial (108 aa).

Residues 1–20 (MTPSRLPWLLSWVSATAWRA) constitute a mitochondrion transit peptide. The segment at 31–108 (RKTSSSQGGK…WERKGRCIDF (78 aa)) is disordered. Basic and acidic residues-rich tracts occupy residues 52 to 87 (KLPE…EKGG) and 95 to 108 (RYGD…CIDF).

Belongs to the SDHAF4 family. In terms of assembly, interacts with SDHA in its FAD-bound form.

Its subcellular location is the mitochondrion matrix. In terms of biological role, plays an essential role in the assembly of succinate dehydrogenase (SDH), an enzyme complex (also referred to as respiratory complex II) that is a component of both the tricarboxylic acid (TCA) cycle and the mitochondrial electron transport chain, and which couples the oxidation of succinate to fumarate with the reduction of ubiquinone (coenzyme Q) to ubiquinol. Binds to the flavoprotein subunit SDHA in its FAD-bound form, blocking the generation of excess reactive oxygen species (ROS) and facilitating its assembly with the iron-sulfur protein subunit SDHB into the SDH catalytic dimer. The polypeptide is Succinate dehydrogenase assembly factor 4, mitochondrial (Homo sapiens (Human)).